Here is a 278-residue protein sequence, read N- to C-terminus: Small ribosomal subunit protein uS2 (278 aa).

An N-acetylserine modification is found at Ser-2. Positions 258–278 (TNEGKTAADEWATGAQTQSNW) are disordered.

Belongs to the universal ribosomal protein uS2 family. Component of the small ribosomal subunit. Mature ribosomes consist of a small (40S) and a large (60S) subunit. The 40S subunit contains about 33 different proteins and 1 molecule of RNA (18S). The 60S subunit contains about 49 different proteins and 3 molecules of RNA (28S, 5.8S and 5S). Interacts with rps-21.

The protein resides in the cytoplasm. Required for the assembly and/or stability of the 40S ribosomal subunit. Required for the processing of the 20S rRNA-precursor to mature 18S rRNA in a late step of the maturation of 40S ribosomal subunits. This chain is Small ribosomal subunit protein uS2, found in Caenorhabditis briggsae.